Consider the following 116-residue polypeptide: uncharacterized protein (116 aa).

The next 2 membrane-spanning stretches (helical) occupy residues V24–A44 and V70–S90.

Its subcellular location is the membrane. This is an uncharacterized protein from Saccharomyces cerevisiae (strain ATCC 204508 / S288c) (Baker's yeast).